A 341-amino-acid polypeptide reads, in one-letter code: Guanine nucleotide-binding protein subunit beta (341 aa).

WD repeat units follow at residues 54 to 84, 96 to 126, 142 to 171, 183 to 213, 225 to 255, 269 to 299, and 311 to 341; these read GHLA…IVWD, LRSS…SIYS, GHTG…ALWD, GHTG…KLWD, GHES…RLFD, NIIC…NVWD, and GHDN…KIWN.

Belongs to the WD repeat G protein beta family. As to quaternary structure, g proteins are composed of 3 units, alpha, beta and gamma.

Guanine nucleotide-binding proteins (G proteins) are involved as a modulator or transducer in various transmembrane signaling systems. The beta and gamma chains are required for the GTPase activity, for replacement of GDP by GTP, and for G protein-effector interaction. This chain is Guanine nucleotide-binding protein subunit beta, found in Lymnaea stagnalis (Great pond snail).